The sequence spans 870 residues: Eukaryotic translation initiation factor 3 subunit C (870 aa).

Positions 1–92 (MSRFFRGDSS…GVKVVKSAKN (92 aa)) are disordered. Residues 14–54 (SSDEEEDLYSDDEEVQEQPEEESEEDDSEEDDDDDDSDSSS) show a composition bias toward acidic residues. Residues 608-782 (FHMHINLELL…SSIIFRKGVE (175 aa)) enclose the PCI domain. Residues 807-870 (TLETRTQGTA…ALGAAVGSRA (64 aa)) are disordered. The span at 824-844 (GRGGRGGNRGGRGGNRGGRGG) shows a compositional bias: gly residues.

Belongs to the eIF-3 subunit C family. In terms of assembly, component of the eukaryotic translation initiation factor 3 (eIF-3) complex.

It localises to the cytoplasm. Component of the eukaryotic translation initiation factor 3 (eIF-3) complex, which is involved in protein synthesis of a specialized repertoire of mRNAs and, together with other initiation factors, stimulates binding of mRNA and methionyl-tRNAi to the 40S ribosome. The eIF-3 complex specifically targets and initiates translation of a subset of mRNAs involved in cell proliferation. The sequence is that of Eukaryotic translation initiation factor 3 subunit C (nip1) from Sclerotinia sclerotiorum (strain ATCC 18683 / 1980 / Ss-1) (White mold).